Consider the following 209-residue polypeptide: Ribosomal RNA small subunit methyltransferase G (209 aa).

S-adenosyl-L-methionine-binding positions include G71, F76, 122–123 (AE), and R135.

This sequence belongs to the methyltransferase superfamily. RNA methyltransferase RsmG family.

Its subcellular location is the cytoplasm. Its function is as follows. Specifically methylates the N7 position of a guanine in 16S rRNA. This is Ribosomal RNA small subunit methyltransferase G from Flavobacterium psychrophilum (strain ATCC 49511 / DSM 21280 / CIP 103535 / JIP02/86).